The sequence spans 251 residues: Cell division protein ZapD (251 aa).

Belongs to the ZapD family. As to quaternary structure, interacts with FtsZ.

It localises to the cytoplasm. Its function is as follows. Cell division factor that enhances FtsZ-ring assembly. Directly interacts with FtsZ and promotes bundling of FtsZ protofilaments, with a reduction in FtsZ GTPase activity. This chain is Cell division protein ZapD, found in Burkholderia cenocepacia (strain ATCC BAA-245 / DSM 16553 / LMG 16656 / NCTC 13227 / J2315 / CF5610) (Burkholderia cepacia (strain J2315)).